We begin with the raw amino-acid sequence, 372 residues long: MKYDLIIIGSGSVGAAAGYYATRAGLKVLMTDAHMPPHQQGSHHGDTRLIRHAYGEGEKYVPLVLRAQTLWEELSTHNEDPIFVRSGVINLGPADSPFLANVAHSAQQWQLNVEQLDAAAIMARWPEIRVPDNYIGLFEMDSGFLRSELAIKTWVRLAEEAGCAQLFNCPVTALHHDNDGVTVETADGEYRAKKVLISAGTWVQALVPELPIQPVRKVFAWYQADGRYSMKNNFPAFTGELPNGDQYYGFPAENDALKIGKHNGGQLIHSPEERKPFAAVASDGSEAFPFLRTILPGIGCCLNGAACTYDNSPDEDFIIDTLPGHDNTLIVTGLSGHGFKFASVLGEIAADFAQGKSPAFDLTPFKLNRFTQ.

4-34 (DLIIIGSGSVGAAAGYYATRAGLKVLMTDAH) is an FAD binding site. Cys-307 bears the S-8alpha-FAD cysteine mark.

Belongs to the MSOX/MTOX family. MTOX subfamily. As to quaternary structure, monomer. FAD serves as cofactor.

The enzyme catalyses N(alpha)-methyl-L-tryptophan + O2 + H2O = L-tryptophan + formaldehyde + H2O2. Its function is as follows. Catalyzes the oxidative demethylation of N-methyl-L-tryptophan. The chain is N-methyl-L-tryptophan oxidase from Citrobacter koseri (strain ATCC BAA-895 / CDC 4225-83 / SGSC4696).